Here is a 395-residue protein sequence, read N- to C-terminus: Thyroid hormone receptor beta (395 aa).

Positions 1–31 (MSEPAENCSPRWKDEAIQNGYIPSYLDKDEL) are modulating. Zn(2+)-binding residues include Cys-32, Cys-35, Cys-49, Cys-52, Cys-70, Cys-76, Cys-86, and Cys-89. 2 consecutive NR C4-type zinc fingers follow at residues 32–52 (CVVC…CEGC) and 70–94 (CKYE…FKKC). Positions 32-99 (CVVCGDKATG…RFKKCIAVGM (68 aa)) form a DNA-binding region, nuclear receptor. The region spanning 142–395 (EEWDLIRMVT…PPLFLEVFED (254 aa)) is the NR LBD domain. 3,3',5-triiodo-L-thyronine-binding residues include Arg-216, Asn-265, and His-369. Arg-216, Asn-265, and His-369 together coordinate L-thyroxine.

It belongs to the nuclear hormone receptor family. NR1 subfamily.

It localises to the nucleus. Functionally, nuclear hormone receptor that can act as a repressor or activator of transcription. High affinity receptor for thyroid hormones, including triiodothyronine and thyroxine. The sequence is that of Thyroid hormone receptor beta (thrb) from Paralichthys olivaceus (Bastard halibut).